Here is a 365-residue protein sequence, read N- to C-terminus: 3-dehydroquinate synthase (365 aa).

NAD(+) is bound by residues 72–77 (SGEKEK), 130–131 (TT), K142, and K151. Residues E184, H247, and H264 each contribute to the Zn(2+) site.

Belongs to the sugar phosphate cyclases superfamily. Dehydroquinate synthase family. The cofactor is Co(2+). Zn(2+) serves as cofactor. It depends on NAD(+) as a cofactor.

The protein resides in the cytoplasm. The catalysed reaction is 7-phospho-2-dehydro-3-deoxy-D-arabino-heptonate = 3-dehydroquinate + phosphate. It functions in the pathway metabolic intermediate biosynthesis; chorismate biosynthesis; chorismate from D-erythrose 4-phosphate and phosphoenolpyruvate: step 2/7. Its function is as follows. Catalyzes the conversion of 3-deoxy-D-arabino-heptulosonate 7-phosphate (DAHP) to dehydroquinate (DHQ). This Bacillus cereus (strain AH187) protein is 3-dehydroquinate synthase.